Here is a 720-residue protein sequence, read N- to C-terminus: Inactive serine protease PAMR1 (720 aa).

The N-terminal stretch at Met-1–Ser-21 is a signal peptide. 8 disulfides stabilise this stretch: Cys-128-Cys-150, Cys-177-Cys-199, Cys-239-Cys-250, Cys-244-Cys-260, Cys-262-Cys-271, Cys-280-Cys-329, Cys-315-Cys-342, and Cys-414-Cys-442. The CUB domain maps to Cys-128–Ile-236. The EGF-like domain occupies Glu-235–Glu-272. Sushi domains lie at Arg-278–Lys-344 and Ala-387–Pro-444. The Peptidase S1 domain occupies Ile-445–Lys-720. N-linked (GlcNAc...) asparagine glycosylation occurs at Asn-451. An intrachain disulfide couples Cys-489 to Cys-505. Asn-614 carries an N-linked (GlcNAc...) asparagine glycan. 2 disulfide bridges follow: Cys-630–Cys-649 and Cys-661–Cys-697.

This sequence belongs to the peptidase S1 family.

It localises to the secreted. In terms of biological role, may play a role in regeneration of skeletal muscle. This chain is Inactive serine protease PAMR1 (PAMR1), found in Pongo abelii (Sumatran orangutan).